Consider the following 24-residue polypeptide: SM-11044-binding protein (24 aa).

In terms of biological role, may mediate relaxation of depolarized colon tonus. It binds iodocyanopindolol and SM-11044. The polypeptide is SM-11044-binding protein (Rattus norvegicus (Rat)).